The following is a 513-amino-acid chain: ATP synthase subunit alpha (513 aa).

169-176 (GDRQTGKT) contacts ATP.

It belongs to the ATPase alpha/beta chains family. In terms of assembly, F-type ATPases have 2 components, CF(1) - the catalytic core - and CF(0) - the membrane proton channel. CF(1) has five subunits: alpha(3), beta(3), gamma(1), delta(1), epsilon(1). CF(0) has three main subunits: a(1), b(2) and c(9-12). The alpha and beta chains form an alternating ring which encloses part of the gamma chain. CF(1) is attached to CF(0) by a central stalk formed by the gamma and epsilon chains, while a peripheral stalk is formed by the delta and b chains.

Its subcellular location is the cell inner membrane. It carries out the reaction ATP + H2O + 4 H(+)(in) = ADP + phosphate + 5 H(+)(out). In terms of biological role, produces ATP from ADP in the presence of a proton gradient across the membrane. The alpha chain is a regulatory subunit. The sequence is that of ATP synthase subunit alpha from Nitrosomonas europaea (strain ATCC 19718 / CIP 103999 / KCTC 2705 / NBRC 14298).